A 938-amino-acid polypeptide reads, in one-letter code: Protein SEY1 (938 aa).

A disordered region spans residues 1–159; the sequence is MTSQSHGAPP…QKSAKSTPGS (159 aa). The Cytoplasmic portion of the chain corresponds to 1 to 839; that stretch reads MTSQSHGAPP…KRSTIQSTTQ (839 aa). Positions 33–45 are enriched in low complexity; it reads SVSSSHSSHSPVT. The segment covering 74–94 has biased composition (pro residues); the sequence is IAAPEPIAAPEPIPAPEPIAA. Over residues 100 to 118 the composition is skewed to basic and acidic residues; that stretch reads LKSEHKPVEREHKPVERKP. A compositionally biased stretch (polar residues) spans 146–158; it reads VPTSQKSAKSTPG. Positions 192-423 constitute a GB1/RHD3-type G domain; that stretch reads GLDYHVVAVF…DPNYVFKPVY (232 aa). A GTP-binding site is contributed by 202–209; that stretch reads GSQSTGKS. Residues 603–630 are a coiled coil; it reads SYDDTLAALEQELDTLRDHKSKVEIDRL. A helical membrane pass occupies residues 840 to 860; sequence IPLYMYGLLLLLGWNEIMAVL. At 861-863 the chain is on the lumenal side; it reads RSP. Residues 864–884 form a helical membrane-spanning segment; the sequence is VYFMFLLVAAGAAYVIHTLHL. Residues 885–938 lie on the Cytoplasmic side of the membrane; that stretch reads WGPLTHMTNTMIAEATDMAKAKLKQVLNEAPTGETREREAPVGSSRDDVELKDL. Positions 911-938 are disordered; sequence LNEAPTGETREREAPVGSSRDDVELKDL. The span at 918–938 shows a compositional bias: basic and acidic residues; the sequence is ETREREAPVGSSRDDVELKDL.

This sequence belongs to the TRAFAC class dynamin-like GTPase superfamily. GB1/RHD3 GTPase family. RHD3 subfamily.

It localises to the endoplasmic reticulum membrane. Cooperates with the reticulon proteins and tubule-shaping DP1 family proteins to generate and maintain the structure of the tubular endoplasmic reticulum network. Has GTPase activity, which is required for its function in ER organization. In Yarrowia lipolytica (strain CLIB 122 / E 150) (Yeast), this protein is Protein SEY1.